The chain runs to 64 residues: Large ribosomal subunit protein uL30 (64 aa).

This sequence belongs to the universal ribosomal protein uL30 family. In terms of assembly, part of the 50S ribosomal subunit.

The protein is Large ribosomal subunit protein uL30 of Rhodopseudomonas palustris (strain BisB18).